A 449-amino-acid polypeptide reads, in one-letter code: Putative BTB/POZ domain-containing protein L742 (449 aa).

Residues 79–148 enclose the BTB domain; sequence EDGYVYINIG…LTMSNQELSG (70 aa).

The protein belongs to the mimivirus BTB/WD family.

This chain is Putative BTB/POZ domain-containing protein L742, found in Acanthamoeba polyphaga mimivirus (APMV).